The sequence spans 323 residues: Mitochondrial glutamate carrier 1 (323 aa).

3 Solcar repeats span residues 6-93 (ISLP…FRHQ), 101-214 (LTLP…LNQL), and 223-312 (SPFY…GIAE). A run of 6 helical transmembrane segments spans residues 12 to 32 (LING…IDLA), 62 to 82 (YFGM…EKAI), 107 to 127 (MLAG…MEML), 189 to 209 (GLGA…PLFA), 223 to 243 (SPFY…AVAV), and 292 to 312 (ALVI…GIAE).

Belongs to the mitochondrial carrier (TC 2.A.29) family. Detected in insulin-secreting beta-cells and pancreatic islets (at the protein level).

It localises to the mitochondrion inner membrane. The catalysed reaction is L-glutamate(in) + H(+)(in) = L-glutamate(out) + H(+)(out). Mitochondrial glutamate/H(+) symporter. Responsible for the transport of glutamate from the cytosol into the mitochondrial matrix with the concomitant import of a proton. Plays a role in the control of glucose-stimulated insulin secretion. In Rattus norvegicus (Rat), this protein is Mitochondrial glutamate carrier 1.